Reading from the N-terminus, the 163-residue chain is I-Kappa-B like protein N3 (163 aa).

2 ANK repeats span residues 62-95 (LGDT…NLNT) and 100-130 (NGDT…NLQT).

The protein belongs to the polydnaviridae I-Kappa-B like protein family.

Its function is as follows. Suppresses the host immune response through NF-kappa-B inactivation. Possesses ankyrin repeat domains required for NF-kappa-B binding but lacks the regulatory regions required for dissociation from NF-kappa-B and degradation. Therefore, prevents host NF-kappa-B release and subsequent activation. The chain is I-Kappa-B like protein N3 (N6) from Microplitis demolitor (Parasitoid wasp).